Consider the following 506-residue polypeptide: Anaerobic nitric oxide reductase transcription regulator NorR (506 aa).

Asp-57 is subject to 4-aspartylphosphate. The 230-residue stretch at 187–416 folds into the Sigma-54 factor interaction domain; sequence MIGLSPAMTQ…LEHAIHRAVV (230 aa). Residues 215 to 222 and 278 to 287 contribute to the ATP site; these read GETGTGKE and ADNGTLFLDE. The H-T-H motif DNA-binding region spans 481–500; sequence WAASARALETDVANLHRLAK.

Its pathway is nitrogen metabolism; nitric oxide reduction. Required for the expression of anaerobic nitric oxide (NO) reductase, acts as a transcriptional activator for at least the norVW operon. Activation also requires sigma-54. In Salmonella heidelberg (strain SL476), this protein is Anaerobic nitric oxide reductase transcription regulator NorR.